A 933-amino-acid polypeptide reads, in one-letter code: Clumping factor A (933 aa).

Residues 1-39 (MNMKKKEKHAIRKKSIGVASVLVGTLIGFGLLSSKEADA) form the signal peptide. Residues 9–20 (HAIRKKSIGVAS) carry the YSIRK-G/S signaling motif motif. Disordered regions lie at residues 34–200 (SKEA…SNKD) and 529–904 (FNNG…SEDE). Residues 40–542 (SENSVTQSDS…SGSGDGIDKP (503 aa)) form a ligand binding A region region. Residues 47–65 (SDSASNESKSNDSSSVSAA) are compositionally biased toward low complexity. The segment covering 71–105 (TNVSDTKTSSNTNNGETSVAQNPAQQETTQSSSTN) has biased composition (polar residues). Low complexity predominate over residues 106–132 (ATTEETPVTGEATTTTTNQANTPATTQ). Over residues 133–200 (SSNTNAEELV…PQSTDASNKD (68 aa)) the composition is skewed to polar residues. Over residues 547-565 (QPDEPGEIEPIPEDSDSDP) the composition is skewed to acidic residues. The span at 566–598 (GSDSGSDSNSDSGSDSGSDSTSDSGSDSASDSD) shows a compositional bias: low complexity. Positions 599-861 (SASDSDSASD…DSDSESDSNS (263 aa)) are enriched in acidic residues. The span at 862 to 880 (DSESGSNNNVVPPNSPKNG) shows a compositional bias: low complexity. The span at 887–896 (NEAKDSKEPL) shows a compositional bias: basic and acidic residues. The LPXTG sorting signal motif lies at 896 to 900 (LPDTG). A Pentaglycyl murein peptidoglycan amidated threonine modification is found at T899. Residues 900 to 933 (GSEDEANTSLIWGLLASIGSLLLFRRKKENKDKK) constitute a propeptide, removed by sortase.

The protein belongs to the serine-aspartate repeat-containing protein (SDr) family.

It localises to the secreted. The protein localises to the cell wall. Its function is as follows. Cell surface-associated protein implicated in virulence. Promotes bacterial attachment exclusively to the gamma-chain of human fibrinogen. Induces formation of bacterial clumps, which diminish the ability of group IIA phospholipase A2 to cause bacterial phospholipid hydrolysis and killing. Significantly decreases macrophage phagocytosis possibly thanks to the clumps, clumped bacteria being too large to be phagocytosed. Dominant factor responsible for human platelet aggregation, which may be an important mechanism for initiating infective endocarditis. Enhances spleen cell proliferative response in vitro, contributing significantly to the immunostimulatory activity of S.aureus. The protein is Clumping factor A (clfA) of Staphylococcus aureus (strain Newman).